The following is a 437-amino-acid chain: uncharacterized protein (437 aa).

Composition is skewed to basic residues over residues 1-29 (MDTPLRGRRAAGRGVRARARPRTRRRHRN), 81-91 (LRGRHPRVRRV), and 101-118 (RRRHLLRRRVGGHRGRNR). Disordered stretches follow at residues 1–31 (MDTPLRGRRAAGRGVRARARPRTRRRHRNDH) and 77–437 (EHVP…QGTR). Residues 119–132 (HAGDRRAPGVDSRL) show a composition bias toward basic and acidic residues. The span at 133-142 (RQQHQHPRGR) shows a compositional bias: basic residues. Positions 143–164 (HASDRVQDGAHPRRQRLREQPR) are enriched in basic and acidic residues. Basic residues predominate over residues 165-190 (HAGRPRRRQPPRRGRSRGTHRRHLRQ). Composition is skewed to basic and acidic residues over residues 198–209 (GPDEDQAREFRG) and 217–253 (HPPTARDVLRGEPGHGDGHHLEGRRGRPRPQGREAGR). 2 stretches are compositionally biased toward basic residues: residues 284 to 293 (TVHRGGRLRG) and 324 to 348 (PHSRKRRDTGAHHRHWRRRRRRVRH). Residues 371–382 (DAAAYASVPAHA) show a composition bias toward low complexity.

This is an uncharacterized protein from Haloferax lucentense (strain DSM 14919 / JCM 9276 / NCIMB 13854 / Aa 2.2) (Haloferax alicantei).